The following is a 98-amino-acid chain: NADH-ubiquinone oxidoreductase chain 4L (98 aa).

3 consecutive transmembrane segments (helical) span residues 1–21 (MPII…GMLI), 29–49 (SLLC…LMAL), and 58–78 (IVPI…LALL).

This sequence belongs to the complex I subunit 4L family. In terms of assembly, core subunit of respiratory chain NADH dehydrogenase (Complex I) which is composed of 45 different subunits.

The protein localises to the mitochondrion inner membrane. The enzyme catalyses a ubiquinone + NADH + 5 H(+)(in) = a ubiquinol + NAD(+) + 4 H(+)(out). In terms of biological role, core subunit of the mitochondrial membrane respiratory chain NADH dehydrogenase (Complex I) which catalyzes electron transfer from NADH through the respiratory chain, using ubiquinone as an electron acceptor. Part of the enzyme membrane arm which is embedded in the lipid bilayer and involved in proton translocation. The sequence is that of NADH-ubiquinone oxidoreductase chain 4L (MT-ND4L) from Nasalis larvatus (Proboscis monkey).